The following is a 320-amino-acid chain: Acetyl-coenzyme A carboxylase carboxyl transferase subunit beta (320 aa).

The CoA carboxyltransferase N-terminal domain occupies Leu-25–Asp-294. Zn(2+)-binding residues include Cys-29, Cys-32, Cys-48, and Cys-51. The C4-type zinc finger occupies Cys-29–Cys-51. A disordered region spans residues Leu-290–Ser-320.

It belongs to the AccD/PCCB family. In terms of assembly, acetyl-CoA carboxylase is a heterohexamer composed of biotin carboxyl carrier protein (AccB), biotin carboxylase (AccC) and two subunits each of ACCase subunit alpha (AccA) and ACCase subunit beta (AccD). Requires Zn(2+) as cofactor.

Its subcellular location is the cytoplasm. The enzyme catalyses N(6)-carboxybiotinyl-L-lysyl-[protein] + acetyl-CoA = N(6)-biotinyl-L-lysyl-[protein] + malonyl-CoA. The protein operates within lipid metabolism; malonyl-CoA biosynthesis; malonyl-CoA from acetyl-CoA: step 1/1. In terms of biological role, component of the acetyl coenzyme A carboxylase (ACC) complex. Biotin carboxylase (BC) catalyzes the carboxylation of biotin on its carrier protein (BCCP) and then the CO(2) group is transferred by the transcarboxylase to acetyl-CoA to form malonyl-CoA. The sequence is that of Acetyl-coenzyme A carboxylase carboxyl transferase subunit beta from Dinoroseobacter shibae (strain DSM 16493 / NCIMB 14021 / DFL 12).